The sequence spans 213 residues: GTP cyclohydrolase 1 (213 aa).

The Zn(2+) site is built by Cys-104, His-107, and Cys-175.

It belongs to the GTP cyclohydrolase I family. As to quaternary structure, toroid-shaped homodecamer, composed of two pentamers of five dimers.

It carries out the reaction GTP + H2O = 7,8-dihydroneopterin 3'-triphosphate + formate + H(+). It participates in cofactor biosynthesis; 7,8-dihydroneopterin triphosphate biosynthesis; 7,8-dihydroneopterin triphosphate from GTP: step 1/1. The chain is GTP cyclohydrolase 1 from Brucella anthropi (strain ATCC 49188 / DSM 6882 / CCUG 24695 / JCM 21032 / LMG 3331 / NBRC 15819 / NCTC 12168 / Alc 37) (Ochrobactrum anthropi).